Reading from the N-terminus, the 565-residue chain is Sulfite reductase [NADPH] hemoprotein beta-component (565 aa).

[4Fe-4S] cluster is bound by residues Cys429, Cys435, Cys474, and Cys478. Cys478 contacts siroheme.

This sequence belongs to the nitrite and sulfite reductase 4Fe-4S domain family. In terms of assembly, alpha(8)-beta(8). The alpha component is a flavoprotein, the beta component is a hemoprotein. Siroheme is required as a cofactor. It depends on [4Fe-4S] cluster as a cofactor.

The catalysed reaction is hydrogen sulfide + 3 NADP(+) + 3 H2O = sulfite + 3 NADPH + 4 H(+). It participates in sulfur metabolism; hydrogen sulfide biosynthesis; hydrogen sulfide from sulfite (NADPH route): step 1/1. Component of the sulfite reductase complex that catalyzes the 6-electron reduction of sulfite to sulfide. This is one of several activities required for the biosynthesis of L-cysteine from sulfate. This is Sulfite reductase [NADPH] hemoprotein beta-component from Shewanella baltica (strain OS223).